A 509-amino-acid polypeptide reads, in one-letter code: Transmembrane protein 104 homolog (509 aa).

Topologically, residues Met1–Gly19 are cytoplasmic. Residues Phe20 to Ala40 form a helical membrane-spanning segment. Residues Arg41–Met45 lie on the Extracellular side of the membrane. A helical membrane pass occupies residues Leu46 to Ile66. At Glu67–Arg151 the chain is on the cytoplasmic side. The helical transmembrane segment at Val152–Ala172 threads the bilayer. Topologically, residues Val173–Asn218 are extracellular. N-linked (GlcNAc...) asparagine glycans are attached at residues Asn186, Asn202, and Asn203. Residues Met219–Val239 form a helical membrane-spanning segment. The Cytoplasmic portion of the chain corresponds to Gln240 to Leu248. The helical transmembrane segment at Thr249–Ile269 threads the bilayer. The Extracellular segment spans residues Ser270–Pro277. A helical membrane pass occupies residues Ala278 to Cys298. Topologically, residues His299 to Ser320 are cytoplasmic. Residues Ile321–Phe341 form a helical membrane-spanning segment. The Extracellular segment spans residues Glu342–Asp361. The chain crosses the membrane as a helical span at residues Phe362–Leu382. Over Ser383–Ser411 the chain is Cytoplasmic. A helical membrane pass occupies residues Val412–Phe432. Over Thr433 to Leu439 the chain is Extracellular. The helical transmembrane segment at Val440–Val460 threads the bilayer. Topologically, residues Tyr461 to Ala487 are cytoplasmic. The helical transmembrane segment at Trp488–Phe508 threads the bilayer. Ser509 is a topological domain (extracellular).

The protein belongs to the TMEM104 family.

The protein localises to the membrane. In Drosophila melanogaster (Fruit fly), this protein is Transmembrane protein 104 homolog.